Here is a 458-residue protein sequence, read N- to C-terminus: GTPase Obg (458 aa).

An Obg domain is found at 1-157; the sequence is MSFLDRVKIY…ITLYLELKVL (157 aa). The OBG-type G domain occupies 158–326; the sequence is ADLGLVGFPN…VLNEIVKVIS (169 aa). Residues 164-171, 189-193, 210-213, 280-283, and 307-309 contribute to the GTP site; these read GFPNAGKS, FTTLN, DIPG, NKAD, and SAA. Residues serine 171 and threonine 191 each coordinate Mg(2+). An OCT domain is found at 341–419; it reads AVHGVEPLFK…VGQKEFEWSG (79 aa). The disordered stretch occupies residues 420 to 458; it reads TELDSERAEQPDFEGYKRRTTQAERLEKRRQRRLKKEEK. Over residues 423 to 446 the composition is skewed to basic and acidic residues; that stretch reads DSERAEQPDFEGYKRRTTQAERLE. Over residues 447-458 the composition is skewed to basic residues; sequence KRRQRRLKKEEK.

Belongs to the TRAFAC class OBG-HflX-like GTPase superfamily. OBG GTPase family. As to quaternary structure, monomer. Requires Mg(2+) as cofactor.

Its subcellular location is the cytoplasm. An essential GTPase which binds GTP, GDP and possibly (p)ppGpp with moderate affinity, with high nucleotide exchange rates and a fairly low GTP hydrolysis rate. Plays a role in control of the cell cycle, stress response, ribosome biogenesis and in those bacteria that undergo differentiation, in morphogenesis control. The polypeptide is GTPase Obg (Elusimicrobium minutum (strain Pei191)).